The chain runs to 326 residues: Probable protein phosphatase 2C 61 (326 aa).

The region spanning 42-316 (LGSVSSLAGG…DDISVVCLSL (275 aa)) is the PPM-type phosphatase domain. Mn(2+) contacts are provided by Asp-77, Gly-78, Asp-261, and Asp-307.

This sequence belongs to the PP2C family. The cofactor is Mg(2+). It depends on Mn(2+) as a cofactor.

The catalysed reaction is O-phospho-L-seryl-[protein] + H2O = L-seryl-[protein] + phosphate. It catalyses the reaction O-phospho-L-threonyl-[protein] + H2O = L-threonyl-[protein] + phosphate. This is Probable protein phosphatase 2C 61 from Arabidopsis thaliana (Mouse-ear cress).